The chain runs to 349 residues: NADH-quinone oxidoreductase subunit H (349 aa).

Transmembrane regions (helical) follow at residues 19–39, 88–108, 123–143, 161–181, 202–222, 249–269, 284–304, and 325–345; these read VWTL…VAYL, GLFI…WAVV, LLFL…AGWA, VSYE…SASL, FLSW…ISGI, GMAF…VSIL, FLPD…FVFL, and VFIP…MSPL.

It belongs to the complex I subunit 1 family. As to quaternary structure, NDH-1 is composed of 14 different subunits. Subunits NuoA, H, J, K, L, M, N constitute the membrane sector of the complex.

It is found in the cell inner membrane. It carries out the reaction a quinone + NADH + 5 H(+)(in) = a quinol + NAD(+) + 4 H(+)(out). Functionally, NDH-1 shuttles electrons from NADH, via FMN and iron-sulfur (Fe-S) centers, to quinones in the respiratory chain. The immediate electron acceptor for the enzyme in this species is believed to be ubiquinone. Couples the redox reaction to proton translocation (for every two electrons transferred, four hydrogen ions are translocated across the cytoplasmic membrane), and thus conserves the redox energy in a proton gradient. This subunit may bind ubiquinone. The sequence is that of NADH-quinone oxidoreductase subunit H from Aromatoleum aromaticum (strain DSM 19018 / LMG 30748 / EbN1) (Azoarcus sp. (strain EbN1)).